The following is a 366-amino-acid chain: D-alanine--D-alanine ligase (366 aa).

The ATP-grasp domain maps to 140–346; sequence KALFAQSDLP…YGELLSRLVD (207 aa). Position 173–228 (173–228) interacts with ATP; the sequence is EDRLGYPCFVKPANMGSSVGISKATNRAELVAAFDDAVRYDRKLIVEKGINVREIE. Mg(2+) is bound by residues D299, E313, and N315.

Belongs to the D-alanine--D-alanine ligase family. Mg(2+) serves as cofactor. Mn(2+) is required as a cofactor.

Its subcellular location is the cytoplasm. It catalyses the reaction 2 D-alanine + ATP = D-alanyl-D-alanine + ADP + phosphate + H(+). Its pathway is cell wall biogenesis; peptidoglycan biosynthesis. Its function is as follows. Cell wall formation. The polypeptide is D-alanine--D-alanine ligase (Heliobacterium modesticaldum (strain ATCC 51547 / Ice1)).